The primary structure comprises 137 residues: Nucleoside diphosphate kinase (137 aa).

Residues lysine 9, phenylalanine 57, arginine 85, threonine 91, arginine 102, and asparagine 112 each contribute to the ATP site. Residue histidine 115 is the Pros-phosphohistidine intermediate of the active site.

It belongs to the NDK family. Homotetramer. Requires Mg(2+) as cofactor.

It is found in the cytoplasm. The enzyme catalyses a 2'-deoxyribonucleoside 5'-diphosphate + ATP = a 2'-deoxyribonucleoside 5'-triphosphate + ADP. It catalyses the reaction a ribonucleoside 5'-diphosphate + ATP = a ribonucleoside 5'-triphosphate + ADP. Functionally, major role in the synthesis of nucleoside triphosphates other than ATP. The ATP gamma phosphate is transferred to the NDP beta phosphate via a ping-pong mechanism, using a phosphorylated active-site intermediate. The polypeptide is Nucleoside diphosphate kinase (Campylobacter jejuni subsp. jejuni serotype O:2 (strain ATCC 700819 / NCTC 11168)).